The primary structure comprises 547 residues: Putative HMP/thiamine import ATP-binding protein YkoD (547 aa).

ABC transporter domains are found at residues 8-250 and 295-523; these read LTVE…KLGI and LEVS…KAKL. Residues 42–49 and 327–334 each bind ATP; these read GPSGCGKS and GPNGTGKS.

Belongs to the ABC transporter superfamily. In terms of assembly, the complex is composed of two ATP-binding proteins (YkoD), two transmembrane proteins (YkoC and YkoE) and a solute-binding protein (YkoF).

The protein resides in the cell membrane. Functionally, part of the ABC transporter complex YkoCDEF that could transport hydroxymethylpyrimidine (HMP) and/or thiamine. Could also transport other HMP-containing products. Responsible for energy coupling to the transport system. The chain is Putative HMP/thiamine import ATP-binding protein YkoD (ykoD) from Bacillus subtilis (strain 168).